The chain runs to 129 residues: Phosphoribosyl-AMP cyclohydrolase (129 aa).

Aspartate 76 is a binding site for Mg(2+). Cysteine 77 is a Zn(2+) binding site. Mg(2+)-binding residues include aspartate 78 and aspartate 80. Zn(2+) is bound by residues cysteine 97 and cysteine 104.

Belongs to the PRA-CH family. Homodimer. Requires Mg(2+) as cofactor. Zn(2+) serves as cofactor.

It localises to the cytoplasm. The enzyme catalyses 1-(5-phospho-beta-D-ribosyl)-5'-AMP + H2O = 1-(5-phospho-beta-D-ribosyl)-5-[(5-phospho-beta-D-ribosylamino)methylideneamino]imidazole-4-carboxamide. It functions in the pathway amino-acid biosynthesis; L-histidine biosynthesis; L-histidine from 5-phospho-alpha-D-ribose 1-diphosphate: step 3/9. Functionally, catalyzes the hydrolysis of the adenine ring of phosphoribosyl-AMP. The polypeptide is Phosphoribosyl-AMP cyclohydrolase (Verminephrobacter eiseniae (strain EF01-2)).